The following is a 1370-amino-acid chain: Histidine kinase P4 (1370 aa).

Positions 1-20 are cleaved as a signal peptide; it reads MRNIGVFSVILFSFLAISLK. The helical transmembrane segment at 799-819 threads the bilayer; sequence WAFCLYALCIGTALIALISFL. Residues 852–1072 enclose the Histidine kinase domain; sequence NISHEFRTPL…IFRVSLPLGR (221 aa). At H855 the chain carries Phosphohistidine; by autocatalysis. Residues 1119–1234 form the Response regulatory domain; that stretch reads TILIVEDHKP…EFRLRIKNIL (116 aa). Position 1167 is a 4-aspartylphosphate (D1167). Positions 1266–1365 constitute an HTH araC/xylS-type domain; that stretch reads KKAFKIVEDN…NETPSQYQNR (100 aa). 2 consecutive DNA-binding regions (H-T-H motif) follow at residues 1284 to 1305 and 1332 to 1355; these read LAFS…KAWT and ISQI…QKKF.

Post-translationally, autophosphorylated. Activation requires a sequential transfer of a phosphate group from a His in the primary transmitter domain, to an Asp in the receiver domain and to a His in the secondary transmitter domain.

Its subcellular location is the membrane. It localises to the cell surface. The catalysed reaction is ATP + protein L-histidine = ADP + protein N-phospho-L-histidine.. In terms of biological role, histidine kinase probably involved in ulvan degradation. Ulvan is the main polysaccharide component of the Ulvales (green seaweed) cell wall. It is composed of disaccharide building blocks comprising 3-sulfated rhamnose (Rha3S) linked to D-glucuronic acid (GlcA), L-iduronic acid (IduA), or D-xylose (Xyl). This Formosa agariphila (strain DSM 15362 / KCTC 12365 / LMG 23005 / KMM 3901 / M-2Alg 35-1) protein is Histidine kinase P4.